A 127-amino-acid polypeptide reads, in one-letter code: uncharacterized protein (127 aa).

4 helical membrane passes run 1 to 21 (MYII…YILV), 32 to 52 (TVAA…LYVF), 68 to 88 (AFFS…IILV), and 100 to 120 (ILDN…LVFK).

Belongs to the GtrA family.

It localises to the cell membrane. This is an uncharacterized protein from Bacillus subtilis (strain 168).